Reading from the N-terminus, the 89-residue chain is Small ribosomal subunit protein uS15 (89 aa).

Belongs to the universal ribosomal protein uS15 family. In terms of assembly, part of the 30S ribosomal subunit. Forms a bridge to the 50S subunit in the 70S ribosome, contacting the 23S rRNA.

One of the primary rRNA binding proteins, it binds directly to 16S rRNA where it helps nucleate assembly of the platform of the 30S subunit by binding and bridging several RNA helices of the 16S rRNA. Its function is as follows. Forms an intersubunit bridge (bridge B4) with the 23S rRNA of the 50S subunit in the ribosome. This Desulfatibacillum aliphaticivorans protein is Small ribosomal subunit protein uS15.